Here is a 30-residue protein sequence, read N- to C-terminus: U10-ctenitoxin-Co1b (30 aa).

2 disulfides stabilise this stretch: Cys-2–Cys-17 and Cys-9–Cys-22.

Expressed by the venom gland.

Its subcellular location is the secreted. Its function is as follows. Antagonist of L-type calcium channels (Cav1/CACNA1). This is U10-ctenitoxin-Co1b from Ctenus ornatus (Brazilian spider).